A 523-amino-acid polypeptide reads, in one-letter code: 2-isopropylmalate synthase (523 aa).

One can recognise a Pyruvate carboxyltransferase domain in the interval 5–267; it reads VIIFDTTLRD…HTAINHQEIW (263 aa). Mn(2+) contacts are provided by Asp14, His202, His204, and Asn238. Residues 392–523 are regulatory domain; that stretch reads RLDYFSVQSG…QHNENNKETV (132 aa).

It belongs to the alpha-IPM synthase/homocitrate synthase family. LeuA type 1 subfamily. Homodimer. It depends on Mn(2+) as a cofactor.

The protein resides in the cytoplasm. It catalyses the reaction 3-methyl-2-oxobutanoate + acetyl-CoA + H2O = (2S)-2-isopropylmalate + CoA + H(+). The protein operates within amino-acid biosynthesis; L-leucine biosynthesis; L-leucine from 3-methyl-2-oxobutanoate: step 1/4. In terms of biological role, catalyzes the condensation of the acetyl group of acetyl-CoA with 3-methyl-2-oxobutanoate (2-ketoisovalerate) to form 3-carboxy-3-hydroxy-4-methylpentanoate (2-isopropylmalate). This chain is 2-isopropylmalate synthase, found in Shigella flexneri serotype 5b (strain 8401).